Here is a 267-residue protein sequence, read N- to C-terminus: Undecaprenyl-diphosphatase (267 aa).

7 helical membrane passes run methionine 1–isoleucine 21, glycine 40–tryptophan 60, leucine 85–valine 105, leucine 112–alanine 132, alanine 189–isoleucine 209, aspartate 219–phenylalanine 239, and valine 245–alanine 265.

It belongs to the UppP family.

The protein resides in the cell inner membrane. The enzyme catalyses di-trans,octa-cis-undecaprenyl diphosphate + H2O = di-trans,octa-cis-undecaprenyl phosphate + phosphate + H(+). Functionally, catalyzes the dephosphorylation of undecaprenyl diphosphate (UPP). Confers resistance to bacitracin. The polypeptide is Undecaprenyl-diphosphatase (Jannaschia sp. (strain CCS1)).